A 183-amino-acid polypeptide reads, in one-letter code: Probable GTP-binding protein EngB (183 aa).

The EngB-type G domain maps to 18–183 (DQNEIVFWGR…LSDLVEHFEL (166 aa)). GTP is bound by residues 26 to 33 (GRSNVGKS), 52 to 56 (GRTRL), 70 to 73 (DLPG), 137 to 140 (TKID), and 166 to 168 (VSS). The Mg(2+) site is built by Ser33 and Thr54.

It belongs to the TRAFAC class TrmE-Era-EngA-EngB-Septin-like GTPase superfamily. EngB GTPase family. The cofactor is Mg(2+).

In terms of biological role, necessary for normal cell division and for the maintenance of normal septation. This Metamycoplasma arthritidis (strain 158L3-1) (Mycoplasma arthritidis) protein is Probable GTP-binding protein EngB.